A 1026-amino-acid chain; its full sequence is Isoleucine--tRNA ligase (1026 aa).

The 'HIGH' region signature appears at P51–H61. Positions K591 to S595 match the 'KMSKS' region motif. Residue K594 participates in ATP binding.

Belongs to the class-I aminoacyl-tRNA synthetase family. IleS type 2 subfamily. In terms of assembly, monomer. Requires Zn(2+) as cofactor.

The protein resides in the cytoplasm. It catalyses the reaction tRNA(Ile) + L-isoleucine + ATP = L-isoleucyl-tRNA(Ile) + AMP + diphosphate. Functionally, catalyzes the attachment of isoleucine to tRNA(Ile). As IleRS can inadvertently accommodate and process structurally similar amino acids such as valine, to avoid such errors it has two additional distinct tRNA(Ile)-dependent editing activities. One activity is designated as 'pretransfer' editing and involves the hydrolysis of activated Val-AMP. The other activity is designated 'posttransfer' editing and involves deacylation of mischarged Val-tRNA(Ile). This Thermoplasma acidophilum (strain ATCC 25905 / DSM 1728 / JCM 9062 / NBRC 15155 / AMRC-C165) protein is Isoleucine--tRNA ligase.